A 453-amino-acid polypeptide reads, in one-letter code: Glutamyl-tRNA(Gln) amidotransferase subunit A (453 aa).

Residues Lys55 and Ser130 each act as charge relay system in the active site. Ser154 acts as the Acyl-ester intermediate in catalysis.

This sequence belongs to the amidase family. GatA subfamily. Heterotrimer of A, B and C subunits.

The catalysed reaction is L-glutamyl-tRNA(Gln) + L-glutamine + ATP + H2O = L-glutaminyl-tRNA(Gln) + L-glutamate + ADP + phosphate + H(+). Functionally, allows the formation of correctly charged Gln-tRNA(Gln) through the transamidation of misacylated Glu-tRNA(Gln) in organisms which lack glutaminyl-tRNA synthetase. The reaction takes place in the presence of glutamine and ATP through an activated gamma-phospho-Glu-tRNA(Gln). The chain is Glutamyl-tRNA(Gln) amidotransferase subunit A from Aliarcobacter butzleri (strain RM4018) (Arcobacter butzleri).